The chain runs to 418 residues: Serine hydroxymethyltransferase (418 aa).

Residues leucine 118 and glycine 122–leucine 124 contribute to the (6S)-5,6,7,8-tetrahydrofolate site. At lysine 227 the chain carries N6-(pyridoxal phosphate)lysine. Glutamate 242 provides a ligand contact to (6S)-5,6,7,8-tetrahydrofolate.

Belongs to the SHMT family. As to quaternary structure, homodimer. Pyridoxal 5'-phosphate is required as a cofactor.

The protein localises to the cytoplasm. It carries out the reaction (6R)-5,10-methylene-5,6,7,8-tetrahydrofolate + glycine + H2O = (6S)-5,6,7,8-tetrahydrofolate + L-serine. Its pathway is one-carbon metabolism; tetrahydrofolate interconversion. It participates in amino-acid biosynthesis; glycine biosynthesis; glycine from L-serine: step 1/1. Functionally, catalyzes the reversible interconversion of serine and glycine with tetrahydrofolate (THF) serving as the one-carbon carrier. This reaction serves as the major source of one-carbon groups required for the biosynthesis of purines, thymidylate, methionine, and other important biomolecules. Also exhibits THF-independent aldolase activity toward beta-hydroxyamino acids, producing glycine and aldehydes, via a retro-aldol mechanism. This is Serine hydroxymethyltransferase from Chloroflexus aggregans (strain MD-66 / DSM 9485).